We begin with the raw amino-acid sequence, 589 residues long: uncharacterized protein (589 aa).

Helical transmembrane passes span 90-110 (YIVIPGLMLSIFLSALDQTVI), 128-148 (SWIGTAYTLAQTSILPFCGIM), 162-182 (IVLFLFGSAMCGAAQNMLWLV), 189-209 (GIGGGGITSLVTIVIADITPL), 217-237 (GCMGVTWGLASVMGPLIGGAI), 245-265 (WIFFINLPTGGLSLALLIFFL), 284-304 (FVGIITITTGVVLFLVGLNIG), 311-331 (AHANVLCYLIFGILCIAGFVV), 355-375 (VMVTSFLHYYIVSTITYYIPV), 390-410 (VHTLSLAVVSSLLSAVSGMGI), 419-439 (PMIGGWIVLLAGTGSMIAIYY), 448-468 (GFLALTAVGTGNLFQPNLIAV), 483-503 (AFMLLRNMGASVGISMGAVIY), and 545-565 (IRMIWIVNCPVAGVGMLLSFF).

The protein belongs to the major facilitator superfamily. TCR/Tet family.

It is found in the membrane. This is an uncharacterized protein from Schizosaccharomyces pombe (strain 972 / ATCC 24843) (Fission yeast).